The primary structure comprises 456 residues: Protein odr-4 homolog (456 aa).

A compositionally biased stretch (low complexity) spans 374–401; that stretch reads IESSKNNNNNNNNNNNNNNNNNNNNSKL. Residues 374 to 403 form a disordered region; sequence IESSKNNNNNNNNNNNNNNNNNNNNSKLSN. Residues 436–456 traverse the membrane as a helical segment; sequence YLIIIISVLVLMVAFYFKFFV.

It belongs to the ODR-4 family.

Its subcellular location is the membrane. Functionally, may play a role in the trafficking of a subset of G-protein coupled receptors. The protein is Protein odr-4 homolog of Dictyostelium discoideum (Social amoeba).